Here is a 161-residue protein sequence, read N- to C-terminus: Nucleotide-binding protein Bphyt_3208 (161 aa).

Belongs to the YajQ family.

Functionally, nucleotide-binding protein. This Paraburkholderia phytofirmans (strain DSM 17436 / LMG 22146 / PsJN) (Burkholderia phytofirmans) protein is Nucleotide-binding protein Bphyt_3208.